The sequence spans 346 residues: Flap endonuclease 1 (346 aa).

Positions 1-102 are N-domain; the sequence is MGVTELGKLI…LEIEQRKKAK (102 aa). 7 residues coordinate Mg(2+): Asp-31, Asp-84, Glu-156, Glu-158, Asp-177, Asp-179, and Asp-239. The I-domain stretch occupies residues 120–261; it reads DVAKYAKRAI…KALKLIWEFG (142 aa).

It belongs to the XPG/RAD2 endonuclease family. FEN1 subfamily. In terms of assembly, interacts with PCNA. PCNA stimulates the nuclease activity without altering cleavage specificity. Mg(2+) serves as cofactor.

Structure-specific nuclease with 5'-flap endonuclease and 5'-3' exonuclease activities involved in DNA replication and repair. During DNA replication, cleaves the 5'-overhanging flap structure that is generated by displacement synthesis when DNA polymerase encounters the 5'-end of a downstream Okazaki fragment. Binds the unpaired 3'-DNA end and kinks the DNA to facilitate 5' cleavage specificity. Cleaves one nucleotide into the double-stranded DNA from the junction in flap DNA, leaving a nick for ligation. Also involved in the base excision repair (BER) pathway. Acts as a genome stabilization factor that prevents flaps from equilibrating into structures that lead to duplications and deletions. Also possesses 5'-3' exonuclease activity on nicked or gapped double-stranded DNA. The protein is Flap endonuclease 1 of Pyrobaculum calidifontis (strain DSM 21063 / JCM 11548 / VA1).